Consider the following 675-residue polypeptide: MSSASRNILVTCALPYANGSIHLGHMLEHVQADIWVRFQRMRGHNIHFICADDAHGTPIMLKAQQLGITPEEMIAAVSQEHQTDFAGFKISFDNYHSTHSDENRYFSELIYTKLKDNGFIKSKTISQLYDPEKNMFLPDRFVKGTCPKCKAVDQYGDNCEVCGATYSPTELINPKSAVSGATPVMKETEHFFFDLPQFADMLQAWTTSGALQEEISNKLNEWFTSGLHQWDITRDAPYFGFEIPGAPGKFFYVWLDAPIGYMGSFKNLCDKRGDIDFDAFWSQNSDAELYHFIGKDIVYFHSLFWPAMLDGAGFRKPSNIFVHGYVTVNGAKMSKSRGTFIKASTYLQHLDPECLRYYYAAKLNNRIDDLDLNLDDFVARVNSDVVNKLVNLASRTAGFITKRLDGKLADTLSEPALYATFTSASERIAEAYENREFSRAIREIMALADEANRYVDEKAPWVIAKQEGQEAELSAVCSTTLNLFRVLMTYLKPVMPELAARAEAFLNVTLNWNDIEQPLLAHNVAPFKALFNRIDPVKVTAMVDASKEEQQTAAPKATGPLADEPIAPEITYDDFAKLDLRIALIKKAEAVPEADKLLRLQLDLGGEVRQVFAGIKSAYSPEQLEGKLTVMVANLAPRKMRFGMSEGMVLAAGPGGKDLFILEPNAGAKPGMRVK.

The 'HIGH' region signature appears at 15-25 (PYANGSIHLGH). Cysteine 146, cysteine 149, cysteine 159, and cysteine 162 together coordinate Zn(2+). Positions 332–336 (KMSKS) match the 'KMSKS' region motif. Residue lysine 335 coordinates ATP. One can recognise a tRNA-binding domain in the interval 574-675 (DFAKLDLRIA…AGAKPGMRVK (102 aa)).

It belongs to the class-I aminoacyl-tRNA synthetase family. MetG type 1 subfamily. Homodimer. Zn(2+) serves as cofactor.

It localises to the cytoplasm. The catalysed reaction is tRNA(Met) + L-methionine + ATP = L-methionyl-tRNA(Met) + AMP + diphosphate. Is required not only for elongation of protein synthesis but also for the initiation of all mRNA translation through initiator tRNA(fMet) aminoacylation. This Tolumonas auensis (strain DSM 9187 / NBRC 110442 / TA 4) protein is Methionine--tRNA ligase.